The chain runs to 750 residues: 3-isopropylmalate dehydratase (750 aa).

C353, C413, and C416 together coordinate [4Fe-4S] cluster. The segment at 492–524 (KYDGSPEVFKSTQDTTPAVKPPQPASDSSSSGG) is disordered.

It belongs to the aconitase/IPM isomerase family. As to quaternary structure, monomer. [4Fe-4S] cluster serves as cofactor.

The enzyme catalyses (2R,3S)-3-isopropylmalate = (2S)-2-isopropylmalate. The protein operates within amino-acid biosynthesis; L-leucine biosynthesis; L-leucine from 3-methyl-2-oxobutanoate: step 2/4. In terms of biological role, catalyzes the isomerization between 2-isopropylmalate and 3-isopropylmalate, via the formation of 2-isopropylmaleate. This chain is 3-isopropylmalate dehydratase (LEU1), found in Rhizopus niveus.